Consider the following 451-residue polypeptide: NADH-quinone oxidoreductase subunit D (451 aa).

This sequence belongs to the complex I 49 kDa subunit family. As to quaternary structure, NDH-1 is composed of 14 different subunits. Subunits NuoB, C, D, E, F, and G constitute the peripheral sector of the complex.

It localises to the cell membrane. The catalysed reaction is a quinone + NADH + 5 H(+)(in) = a quinol + NAD(+) + 4 H(+)(out). In terms of biological role, NDH-1 shuttles electrons from NADH, via FMN and iron-sulfur (Fe-S) centers, to quinones in the respiratory chain. The immediate electron acceptor for the enzyme in this species is believed to be a menaquinone. Couples the redox reaction to proton translocation (for every two electrons transferred, four hydrogen ions are translocated across the cytoplasmic membrane), and thus conserves the redox energy in a proton gradient. The chain is NADH-quinone oxidoreductase subunit D from Mycolicibacterium gilvum (strain PYR-GCK) (Mycobacterium gilvum (strain PYR-GCK)).